The chain runs to 155 residues: 3-hydroxyacyl-[acyl-carrier-protein] dehydratase FabZ (155 aa).

His58 is an active-site residue.

It belongs to the thioester dehydratase family. FabZ subfamily.

The protein localises to the cytoplasm. It catalyses the reaction a (3R)-hydroxyacyl-[ACP] = a (2E)-enoyl-[ACP] + H2O. Its function is as follows. Involved in unsaturated fatty acids biosynthesis. Catalyzes the dehydration of short chain beta-hydroxyacyl-ACPs and long chain saturated and unsaturated beta-hydroxyacyl-ACPs. The polypeptide is 3-hydroxyacyl-[acyl-carrier-protein] dehydratase FabZ (Rhizobium leguminosarum bv. trifolii (strain WSM2304)).